Here is a 76-residue protein sequence, read N- to C-terminus: Zinc finger protein 706 (76 aa).

Low complexity predominate over residues 1-13 (MARGQQKIQSQQK). Disordered stretches follow at residues 1 to 32 (MARGQQKIQSQQKNAKKQAEQKKKQGHDQKAA) and 53 to 76 (TFKQHFESKHPKTPLPPELADVQA). Basic and acidic residues-rich tracts occupy residues 17-31 (KQAEQKKKQGHDQKA) and 53-62 (TFKQHFESKH). Residues 39–62 (YTCTVCRTQMPDPKTFKQHFESKH) form a C2H2-type zinc finger.

The protein localises to the cytoplasm. It is found in the nucleus. Its function is as follows. Transcription repressor involved in the exit of embryonic stem cells (ESCs) from self-renewal. The polypeptide is Zinc finger protein 706 (Gallus gallus (Chicken)).